The chain runs to 724 residues: uncharacterized protein (724 aa).

This is an uncharacterized protein from Treponema pallidum (strain Nichols).